The sequence spans 155 residues: Transcriptional repressor NrdR (155 aa).

The segment at 3–34 (CPFCGHSNTQVLDTRMSEDGDAVRRRRRCEAC) is a zinc-finger region. In terms of domain architecture, ATP-cone spans 49-139 (PAIVKKNGSR…VYRSFEDVSE (91 aa)).

The protein belongs to the NrdR family. The cofactor is Zn(2+).

In terms of biological role, negatively regulates transcription of bacterial ribonucleotide reductase nrd genes and operons by binding to NrdR-boxes. In Cupriavidus necator (strain ATCC 17699 / DSM 428 / KCTC 22496 / NCIMB 10442 / H16 / Stanier 337) (Ralstonia eutropha), this protein is Transcriptional repressor NrdR.